A 77-amino-acid polypeptide reads, in one-letter code: DNA-directed RNA polymerase subunit epsilon (77 aa).

It belongs to the RNA polymerase subunit epsilon family. In terms of assembly, RNAP is composed of a core of 2 alpha, a beta and a beta' subunit. The core is associated with a delta subunit, and at least one of epsilon or omega. When a sigma factor is associated with the core the holoenzyme is formed, which can initiate transcription.

The enzyme catalyses RNA(n) + a ribonucleoside 5'-triphosphate = RNA(n+1) + diphosphate. A non-essential component of RNA polymerase (RNAP). The protein is DNA-directed RNA polymerase subunit epsilon of Streptococcus pneumoniae serotype 2 (strain D39 / NCTC 7466).